A 303-amino-acid polypeptide reads, in one-letter code: Vesicle-trafficking protein SEC22c (303 aa).

The Cytoplasmic portion of the chain corresponds to Met1 to Pro183. A Longin domain is found at Cys8–Ile119. Residues Val184–Ile204 traverse the membrane as a helical segment. Residues Arg205 to Asn223 are Lumenal-facing. A helical membrane pass occupies residues Ile224–Tyr244. The Cytoplasmic segment spans residues Ser245 to Arg248. Residues Thr249–Leu269 form a helical membrane-spanning segment. Position 270 (Arg270) is a topological domain, lumenal. A helical membrane pass occupies residues Asn271–Thr291. The Cytoplasmic portion of the chain corresponds to Arg292–Val303.

This sequence belongs to the synaptobrevin family. In terms of tissue distribution, ubiquitously expressed.

The protein resides in the endoplasmic reticulum membrane. Its function is as follows. May be involved in vesicle transport between the ER and the Golgi complex. This chain is Vesicle-trafficking protein SEC22c (SEC22C), found in Homo sapiens (Human).